The following is a 130-amino-acid chain: Large ribosomal subunit protein bL20 (130 aa).

This sequence belongs to the bacterial ribosomal protein bL20 family.

Functionally, binds directly to 23S ribosomal RNA and is necessary for the in vitro assembly process of the 50S ribosomal subunit. It is not involved in the protein synthesizing functions of that subunit. This chain is Large ribosomal subunit protein bL20, found in Salinispora tropica (strain ATCC BAA-916 / DSM 44818 / JCM 13857 / NBRC 105044 / CNB-440).